Here is a 247-residue protein sequence, read N- to C-terminus: Eukaryotic translation initiation factor 6 (247 aa).

Phosphoserine; by CK1 occurs at positions 174 and 175.

Belongs to the eIF-6 family. Monomer. Associates with the 60S ribosomal subunit. Post-translationally, phosphorylation at Ser-174 and Ser-175 promotes nuclear export.

It is found in the cytoplasm. The protein localises to the nucleus. The protein resides in the nucleolus. In terms of biological role, binds to the 60S ribosomal subunit and prevents its association with the 40S ribosomal subunit to form the 80S initiation complex in the cytoplasm. Is also involved in ribosome biogenesis. Associates with pre-60S subunits in the nucleus and is involved in its nuclear export. This chain is Eukaryotic translation initiation factor 6 (tif6), found in Aspergillus oryzae (strain ATCC 42149 / RIB 40) (Yellow koji mold).